A 156-amino-acid polypeptide reads, in one-letter code: Eosinophil cationic protein 2 (156 aa).

The signal sequence occupies residues 1–25 (MGPKLLESRLCLLLLLGLVLMLASC). His38 serves as the catalytic Proton acceptor. 4 disulfides stabilise this stretch: Cys47–Cys106, Cys61–Cys119, Cys79–Cys134, and Cys86–Cys94. 62 to 66 (KGLNT) is a binding site for substrate. N-linked (GlcNAc...) asparagine glycans are attached at residues Asn89, Asn96, and Asn107. Catalysis depends on His151, which acts as the Proton donor.

This sequence belongs to the pancreatic ribonuclease family.

It localises to the cytoplasmic granule. In terms of biological role, cytotoxin and helminthotoxin with ribonuclease activity. Selectively chemotactic for dendritic cells. Possesses a wide variety of biological activities. This Mus musculus (Mouse) protein is Eosinophil cationic protein 2 (Ear2).